Consider the following 324-residue polypeptide: Homocysteine S-methyltransferase 1 (324 aa).

One can recognise a Hcy-binding domain in the interval 6–320; it reads IKELIVEHPG…KDIAEIASAV (315 aa). 3 residues coordinate Zn(2+): cysteine 238, cysteine 305, and cysteine 306.

Zn(2+) serves as cofactor.

It localises to the cytoplasm. The catalysed reaction is S-methyl-L-methionine + L-homocysteine = 2 L-methionine + H(+). Its function is as follows. Homocysteine S-methyltransferase involved in the conversion of S-adenosylmethionine (AdoMet) to methionine to control the methionine/AdoMet ratio. Also converts S-methylmethionine (SMM) to methionine. The sequence is that of Homocysteine S-methyltransferase 1 (MHT1) from Saccharomyces cerevisiae (strain ATCC 204508 / S288c) (Baker's yeast).